Here is a 551-residue protein sequence, read N- to C-terminus: MDRRRFIKGSMAMAAVCGTSGIASLFSQAAFAADSDIADGQTQRFDFSILQSMAHDLAQTAWRGAPRPLPDTLATMTPQAYNSIQYDAEKSLWHNVENRQLDAQFFHMGMGFRRRVRMFSVDPATHLAREIHFRPELFKYNDAGVDTKQLEGQSDLGFAGFRVFKAPELARRDVVSFLGASYFRAVDDTYQYGLSARGLAIDTYTDSKEEFPDFTAFWFDTVKPGATTFTVYALLDSASITGAYKFTIHCEKNQVIMDVENHLYARKDIKQLGIAPMTSMFSCGTNERRMCDTIHPQIHDSDRLSMWRGNGEWICRPLNNPQKLQFNAYTDNNPKGFGLLQLDRDFSHYQDIMGWYNKRPSLWVEPRNKWGKGTIGLMEIPTTGETLDNIVCFWQPEKAVKAGDEFAFQYRLYWSAQPPVHCPLARVMATRTGMGGFPEGWAPGEHYPEKWARRFAVDFVGGDLKAAAPKGIEPVITLSSGEAKQIEILYIEPIDGYRIQFDWYPTSDSTDPVDMRMYLRCQGDAISETWLYQYFPPAPDKRQYVDDRVMS.

A signal peptide (tat-type signal) is located at residues 1–32 (MDRRRFIKGSMAMAAVCGTSGIASLFSQAAFA).

It belongs to the OpgD/OpgG family. In terms of processing, predicted to be exported by the Tat system. The position of the signal peptide cleavage has not been experimentally proven.

The protein localises to the periplasm. Its pathway is glycan metabolism; osmoregulated periplasmic glucan (OPG) biosynthesis. Functionally, probably involved in the control of the structural glucose backbone of osmoregulated periplasmic glucans (OPGs). The protein is Glucans biosynthesis protein D of Escherichia coli O1:K1 / APEC.